The sequence spans 172 residues: Translationally-controlled tumor protein homolog (172 aa).

The TCTP domain occupies 1 to 172 (MIIYKDCITE…FKDGLIIEKC (172 aa)).

It belongs to the TCTP family.

The protein resides in the cytoplasm. Functionally, involved in calcium binding and microtubule stabilization. This chain is Translationally-controlled tumor protein homolog (tpt1), found in Xenopus laevis (African clawed frog).